We begin with the raw amino-acid sequence, 78 residues long: Sec-independent protein translocase protein TatA (78 aa).

The helical transmembrane segment at 1–21 (MGSLSIWHWIVVIAVVLLLFG) threads the bilayer. Basic and acidic residues predominate over residues 43-60 (LQDDEKTAEKSEPVKSID). The disordered stretch occupies residues 43–78 (LQDDEKTAEKSEPVKSIDHTSTPGATNRTDVGSKAV). Residues 61–72 (HTSTPGATNRTD) are compositionally biased toward polar residues.

Belongs to the TatA/E family. In terms of assembly, the Tat system comprises two distinct complexes: a TatABC complex, containing multiple copies of TatA, TatB and TatC subunits, and a separate TatA complex, containing only TatA subunits. Substrates initially bind to the TatABC complex, which probably triggers association of the separate TatA complex to form the active translocon.

The protein localises to the cell inner membrane. Its function is as follows. Part of the twin-arginine translocation (Tat) system that transports large folded proteins containing a characteristic twin-arginine motif in their signal peptide across membranes. TatA could form the protein-conducting channel of the Tat system. This chain is Sec-independent protein translocase protein TatA, found in Rhodopseudomonas palustris (strain ATCC BAA-98 / CGA009).